The primary structure comprises 288 residues: 4-diphosphocytidyl-2-C-methyl-D-erythritol kinase (288 aa).

Residue Lys-10 is part of the active site. 94 to 104 is an ATP binding site; that stretch reads PVAAGLGGGSS. Asp-136 is an active-site residue.

This sequence belongs to the GHMP kinase family. IspE subfamily.

The enzyme catalyses 4-CDP-2-C-methyl-D-erythritol + ATP = 4-CDP-2-C-methyl-D-erythritol 2-phosphate + ADP + H(+). The protein operates within isoprenoid biosynthesis; isopentenyl diphosphate biosynthesis via DXP pathway; isopentenyl diphosphate from 1-deoxy-D-xylulose 5-phosphate: step 3/6. Its function is as follows. Catalyzes the phosphorylation of the position 2 hydroxy group of 4-diphosphocytidyl-2C-methyl-D-erythritol. The polypeptide is 4-diphosphocytidyl-2-C-methyl-D-erythritol kinase (Lactiplantibacillus plantarum (strain ATCC BAA-793 / NCIMB 8826 / WCFS1) (Lactobacillus plantarum)).